Reading from the N-terminus, the 188-residue chain is Putative manganese efflux pump MntP (188 aa).

Helical transmembrane passes span 2–22 (IMGN…AFAV), 39–59 (LITG…GFLL), 67–87 (ITAI…LNMI), 107–127 (IILS…FAFL), 129–149 (VDIV…SFLG), and 166–186 (LAGG…HLGF).

Belongs to the MntP (TC 9.B.29) family.

The protein localises to the cell membrane. Its function is as follows. Probably functions as a manganese efflux pump. This chain is Putative manganese efflux pump MntP, found in Desulfitobacterium hafniense (strain Y51).